Consider the following 92-residue polypeptide: Phospholemman (92 aa).

Residues 1–20 (MASPGHILIVCVCLLSMASA) form the signal peptide. The Extracellular portion of the chain corresponds to 21–35 (EAPQEPDPFTYDYHT). Residues 36–56 (LRIGGLTIAGILFILGILIIL) traverse the membrane as a helical segment. Over 57-92 (SKRCRCKFNQQQRTGEPDEEEGTFRSSIRRLSTRRR) the chain is Cytoplasmic. A lipid anchor (S-palmitoyl cysteine) is attached at cysteine 60. Cysteine 62 carries the post-translational modification S-glutathionyl cysteine; alternate. Residue cysteine 62 is the site of S-palmitoyl cysteine; alternate attachment. A disordered region spans residues 66-92 (QQQRTGEPDEEEGTFRSSIRRLSTRRR). Threonine 79 carries the post-translational modification Phosphothreonine. The residue at position 82 (serine 82) is a Phosphoserine. A Phosphoserine; by PKA and PKC modification is found at serine 83. The span at 83–92 (SIRRLSTRRR) shows a compositional bias: basic residues. Serine 88 carries the post-translational modification Phosphoserine; by PKA. Position 89 is a phosphothreonine; by PKC (threonine 89).

The protein belongs to the FXYD family. As to quaternary structure, homotetramer. Monomer. Regulatory subunit of the sodium/potassium-transporting ATPase (NKA) which is composed of a catalytic alpha subunit, a non-catalytic beta subunit and an additional regulatory subunit. The monomeric form associates with NKA while the oligomeric form does not. Interacts with the catalytic alpha-1 subunit ATP1A1. Also interacts with the catalytic alpha-2 and alpha-3 subunits ATP1A2 and ATP1A3. Very little interaction with ATP1A1, ATP1A2 or ATP1A3 when phosphorylated at Ser-83. Interacts with the non-catalytic beta-1 subunit ATP1B1. Oxidative stress decreases interaction with ATP1A1 but increases interaction with ATP1B1. Major plasma membrane substrate for cAMP-dependent protein kinase (PKA) and protein kinase C (PKC) in several different tissues. Phosphorylated in response to insulin and adrenergic stimulation. Phosphorylation at Ser-88 stimulates sodium/potassium-transporting ATPase activity while the unphosphorylated form inhibits sodium/potassium-transporting ATPase activity. Phosphorylation increases tetramerization, decreases binding to ATP1A1 and reduces inhibition of ATP1A1 activity. Phosphorylation at Ser-83 leads to greatly reduced interaction with ATP1A1, ATP1A2 and ATP1A3. May be phosphorylated by DMPK. Post-translationally, palmitoylation increases half-life and stability and is enhanced upon phosphorylation at Ser-88 by PKA. As to expression, in adult brain, highest levels are found in the cerebellum and in the lateral, third and fourth ventricles of the choroid plexus (at protein level). Also detected in cells of a portion of the ependymal lining of the lateral ventricle on its rostral surface posterior to the caudate putamen (at protein level). Expressed in a subset of neurons which secrete gonadotropin-releasing hormone.

The protein resides in the cell membrane. It is found in the sarcolemma. Its subcellular location is the apical cell membrane. It localises to the membrane. The protein localises to the caveola. The protein resides in the T-tubule. Functionally, associates with and regulates the activity of the sodium/potassium-transporting ATPase (NKA) which transports Na(+) out of the cell and K(+) into the cell. Inhibits NKA activity in its unphosphorylated state and stimulates activity when phosphorylated. Reduces glutathionylation of the NKA beta-1 subunit ATP1B1, thus reversing glutathionylation-mediated inhibition of ATP1B1. Contributes to female sexual development by maintaining the excitability of neurons which secrete gonadotropin-releasing hormone. This chain is Phospholemman, found in Rattus norvegicus (Rat).